The following is a 378-amino-acid chain: Erythronate-4-phosphate dehydrogenase (378 aa).

Residues Ser-45 and Thr-66 each coordinate substrate. NAD(+) contacts are provided by Asp-146 and Thr-175. Arg-208 is a catalytic residue. NAD(+) is bound at residue Asp-232. The active site involves Glu-237. His-254 serves as the catalytic Proton donor. Gly-257 provides a ligand contact to NAD(+). Residue Tyr-258 participates in substrate binding.

The protein belongs to the D-isomer specific 2-hydroxyacid dehydrogenase family. PdxB subfamily. As to quaternary structure, homodimer.

The protein resides in the cytoplasm. It catalyses the reaction 4-phospho-D-erythronate + NAD(+) = (R)-3-hydroxy-2-oxo-4-phosphooxybutanoate + NADH + H(+). Its pathway is cofactor biosynthesis; pyridoxine 5'-phosphate biosynthesis; pyridoxine 5'-phosphate from D-erythrose 4-phosphate: step 2/5. In terms of biological role, catalyzes the oxidation of erythronate-4-phosphate to 3-hydroxy-2-oxo-4-phosphonooxybutanoate. This Escherichia coli O139:H28 (strain E24377A / ETEC) protein is Erythronate-4-phosphate dehydrogenase.